Consider the following 86-residue polypeptide: MATKKAGGSSRNGRDSAGRRLGVKQSDGQYVIPGNIIVRQRGTKIHPGRNVGLGKDHTIFALIEGRVEFVTKRNHKVVNVKEIASA.

The segment at 1–26 (MATKKAGGSSRNGRDSAGRRLGVKQS) is disordered.

This sequence belongs to the bacterial ribosomal protein bL27 family.

This Rickettsia canadensis (strain McKiel) protein is Large ribosomal subunit protein bL27.